The chain runs to 82 residues: DNA-directed RNA polymerase subunit omega (82 aa).

This sequence belongs to the RNA polymerase subunit omega family. As to quaternary structure, in cyanobacteria the RNAP catalytic core is composed of 2 alpha, 1 beta, 1 beta', 1 gamma and 1 omega subunit. When a sigma factor is associated with the core the holoenzyme is formed, which can initiate transcription.

The catalysed reaction is RNA(n) + a ribonucleoside 5'-triphosphate = RNA(n+1) + diphosphate. Functionally, promotes RNA polymerase assembly. Latches the N- and C-terminal regions of the beta' subunit thereby facilitating its interaction with the beta and alpha subunits. The sequence is that of DNA-directed RNA polymerase subunit omega from Trichodesmium erythraeum (strain IMS101).